The following is a 505-amino-acid chain: Protein amnionless (505 aa).

The first 20 residues, 1-20 (MGLHWQWLIWALVGLHVALA), serve as a signal peptide directing secretion. Residues 21–344 (TKWYGGGMDF…RPYNPNVSFS (324 aa)) lie on the Extracellular side of the membrane. Residues 345–365 (SIVLILFCMALVGLVSVVILA) form a helical membrane-spanning segment. The Cytoplasmic portion of the chain corresponds to 366 to 505 (HFMPENPYLN…CEADTDEETI (140 aa)). The tract at residues 451-482 (GALEEAAKESQEQDEILSVPKMETGDLDARSV) is disordered. Over residues 473 to 482 (ETGDLDARSV) the composition is skewed to basic and acidic residues.

In terms of tissue distribution, specifically expressed in nephrocytes.

It localises to the cell membrane. In terms of biological role, required in the nephrocyte for normal uptake of proteins and elimination of toxins, and for maintenance of endocytic trafficking structures. May function together with Cubn. This is Protein amnionless from Drosophila melanogaster (Fruit fly).